Reading from the N-terminus, the 402-residue chain is Nicotinate phosphoribosyltransferase (402 aa).

H224 carries the phosphohistidine; by autocatalysis modification.

Belongs to the NAPRTase family. Post-translationally, transiently phosphorylated on a His residue during the reaction cycle. Phosphorylation strongly increases the affinity for substrates and increases the rate of nicotinate D-ribonucleotide production. Dephosphorylation regenerates the low-affinity form of the enzyme, leading to product release.

The enzyme catalyses nicotinate + 5-phospho-alpha-D-ribose 1-diphosphate + ATP + H2O = nicotinate beta-D-ribonucleotide + ADP + phosphate + diphosphate. It functions in the pathway cofactor biosynthesis; NAD(+) biosynthesis; nicotinate D-ribonucleotide from nicotinate: step 1/1. In terms of biological role, catalyzes the synthesis of beta-nicotinate D-ribonucleotide from nicotinate and 5-phospho-D-ribose 1-phosphate at the expense of ATP. This Neisseria gonorrhoeae (strain ATCC 700825 / FA 1090) protein is Nicotinate phosphoribosyltransferase.